A 2290-amino-acid chain; its full sequence is Armadillo repeat-containing X-linked protein 4 (2290 aa).

Residues 7 to 24 (VGWVTAGLVIWAGTCYYI) traverse the membrane as a helical segment. 8 disordered regions span residues 517 to 549 (QGEALPNTRGKARGKAKAKCKTGPGMDMKTCTQ), 564 to 583 (SRVDGRGNPNATSKAGTKAD), 967 to 988 (KVRGNSNAVPKAEAGADTVGSA), 1014 to 1087 (AVPK…ACRK), 1302 to 1430 (GSWA…ANSG), 1521 to 1715 (GSWG…RSED), 1911 to 1931 (SNTFRSKSGKDASFESGAGDN), and 1954 to 1973 (NENTSEDKSAPKAKAKKSSE). Residues 526 to 536 (GKARGKAKAKC) show a composition bias toward basic residues. Residues 1073–1087 (TSESEGGSGTQACRK) show a composition bias toward polar residues. Composition is skewed to gly residues over residues 1328-1341 (SWAGAGGQASGGSM) and 1403-1414 (AGAGGQAGGGSK). Polar residues predominate over residues 1419-1430 (DQSSGRSWANSG). The segment covering 1521–1535 (GSWGGASGQDVGGSR) has biased composition (gly residues). Residues 1537–1558 (GPTNQSSAGSWDSPGSQVSGSC) show a composition bias toward polar residues. 2 stretches are compositionally biased toward gly residues: residues 1581 to 1598 (IGGGFWPGAGDQTGGGSR) and 1609 to 1623 (GSWGVAGGQVLGGAR). A compositionally biased stretch (polar residues) spans 1628–1645 (DQSSGGSWAGTGNQSSGR). The span at 1674 to 1687 (GAGSQASGESWAGS) shows a compositional bias: low complexity. 4 ARM repeats span residues 2031-2071 (RCKH…NSAD), 2073-2112 (SYSHEVVRNVGGISVIESLLNNPYPSVRQKALNALNNISV), 2153-2192 (ITSEYQHMVTNYISEFLRLLTVGSGETKDHVLGMLLNFSK), and 2194-2234 (PSMT…NINY).

The protein belongs to the eutherian X-chromosome-specific Armcx family.

It is found in the membrane. This chain is Armadillo repeat-containing X-linked protein 4 (ARMCX4), found in Homo sapiens (Human).